A 148-amino-acid polypeptide reads, in one-letter code: UPF0756 membrane protein KPK_3307 (148 aa).

4 helical membrane-spanning segments follow: residues 14 to 34, 51 to 71, 86 to 106, and 121 to 141; these read ALGF…LIIV, LTVG…SGTL, LLAI…VSLM, and VLGV…AGII.

This sequence belongs to the UPF0756 family.

The protein resides in the cell membrane. The polypeptide is UPF0756 membrane protein KPK_3307 (Klebsiella pneumoniae (strain 342)).